A 1005-amino-acid polypeptide reads, in one-letter code: uncharacterized protein (1005 aa).

The signal sequence occupies residues 1 to 24 (MKFQRKYWGLLSTLGVSSAVALSA). Cys-25 carries N-palmitoyl cysteine lipidation. Cys-25 carries S-diacylglycerol cysteine lipidation. 2 disordered regions span residues 105 to 165 (KKDK…EEKF) and 786 to 825 (TQKIDQQNTASTTSDVTVKKADSSQDSSKSNTEEEKWDDV). Composition is skewed to low complexity over residues 110-131 (TSSQKTSTNSSCTTTSSGTSTS) and 145-156 (QSSSNGQNNQQS). The span at 786–801 (TQKIDQQNTASTTSDV) shows a compositional bias: polar residues.

Its subcellular location is the cell membrane. This is an uncharacterized protein from Mycoplasma pneumoniae (strain ATCC 29342 / M129 / Subtype 1) (Mycoplasmoides pneumoniae).